Reading from the N-terminus, the 654-residue chain is Potassium voltage-gated channel subfamily A member 4 (654 aa).

Topologically, residues 1-305 are cytoplasmic; the sequence is MEVAMVSAES…LLFEYPESSS (305 aa). A disordered region spans residues 24–145; the sequence is QARARERERL…EEGRFYYSEE (122 aa). Residues 36 to 50 show a composition bias toward low complexity; it reads SRAAAAAAVAAATAA. Over residues 81-99 the composition is skewed to basic residues; the sequence is GSRRRRRQRTEKKKLHHRQ. Position 122 is a phosphoserine (serine 122). The span at 122–137 shows a compositional bias: acidic residues; that stretch reads SEEEEDEEEEEEEEEE. The chain crosses the membrane as a helical span at residues 306–327; that stretch reads PARGIAIVSVLVILISIVIFCL. Over 328 to 371 the chain is Extracellular; sequence ETLPEFRDDRDLIMALSAGGHSRLLNDTSAPHLENSGHTIFNDP. Asparagine 353 is a glycosylation site (N-linked (GlcNAc...) asparagine). Residues 372 to 393 traverse the membrane as a helical segment; that stretch reads FFIVETVCIVWFSFEFVVRCFA. Topologically, residues 394–404 are cytoplasmic; sequence CPSQALFFKNI. The helical transmembrane segment at 405–425 threads the bilayer; it reads MNIIDIVSILPYFITLGTDLA. Over 426–440 the chain is Extracellular; the sequence is QQQGGGNGQQQQAMS. The helical; Voltage-sensor transmembrane segment at 441–461 threads the bilayer; that stretch reads FAILRIIRLVRVFRIFKLSRH. Residues 462–476 lie on the Cytoplasmic side of the membrane; that stretch reads SKGLQILGHTLRASM. The interval 463 to 476 is S4-S5 linker; it reads KGLQILGHTLRASM. The helical transmembrane segment at 477 to 498 threads the bilayer; that stretch reads RELGLLIFFLFIGVILFSSAVY. The Extracellular segment spans residues 499-512; sequence FAEADEPTTHFQSI. The segment at residues 513-524 is an intramembrane region (helical); it reads PDAFWWAVVTMT. Residues 525-530 carry the Selectivity filter motif; it reads TVGYGD. Residues 525–532 lie within the membrane without spanning it; that stretch reads TVGYGDMK. Topologically, residues 533–539 are extracellular; that stretch reads PITVGGK. The chain crosses the membrane as a helical span at residues 540 to 568; it reads IVGSLCAIAGVLTIALPVPVIVSNFNYFY. The Cytoplasmic portion of the chain corresponds to 569–654; sequence HRETENEEQT…SNAKAVETDV (86 aa). Serine 600 is subject to Phosphoserine; by PKA. A compositionally biased stretch (basic and acidic residues) spans 630 to 641; it reads CQGKGDESETDK. Residues 630–654 are disordered; sequence CQGKGDESETDKNNCSNAKAVETDV. Positions 652–654 match the PDZ-binding motif; it reads TDV.

The protein belongs to the potassium channel family. A (Shaker) (TC 1.A.1.2) subfamily. Kv1.4/KCNA4 sub-subfamily. Homotetramer and heterotetramer of potassium channel proteins. Interacts with KCNAB1 and KCNAB2. Interacts with DLG1, DLG2 and DLG4 via their PDZ domains. Interacts with SIGMAR1. Detected in a complex with KCNA1. Interacts with KCNA2. Part of a complex containing KCNA1, KCNAB1 and LGI1. Interacts (via cytoplasmic N-terminal domain) with KCNRG. Expressed in the brain, lens and retina.

The protein localises to the cell membrane. Its subcellular location is the cell projection. The protein resides in the axon. It catalyses the reaction K(+)(in) = K(+)(out). Its function is as follows. Voltage-gated potassium channel that mediates transmembrane potassium transport in excitable membranes. Forms tetrameric potassium-selective channels through which potassium ions pass in accordance with their electrochemical gradient. The channel alternates between opened and closed conformations in response to the voltage difference across the membrane. Can form functional homotetrameric channels and heterotetrameric channels that contain variable proportions of KCNA1, KCNA2, KCNA4, KCNA5, and possibly other family members as well; channel properties depend on the type of alpha subunits that are part of the channel. Channel properties are modulated by cytoplasmic beta subunits that regulate the subcellular location of the alpha subunits and promote rapid inactivation. In vivo, membranes probably contain a mixture of heteromeric potassium channel complexes, making it difficult to assign currents observed in intact tissues to any particular potassium channel family member. Homotetrameric KCNA4 forms a potassium channel that opens in response to membrane depolarization, followed by rapid spontaneous channel closure. Likewise, a heterotetrameric channel formed by KCNA1 and KCNA4 shows rapid inactivation. This Mus musculus (Mouse) protein is Potassium voltage-gated channel subfamily A member 4 (Kcna4).